A 456-amino-acid polypeptide reads, in one-letter code: GTPase Der (456 aa).

2 EngA-type G domains span residues 4–169 and 178–353; these read PVVA…PSKD and VQLA…DQSR. GTP is bound by residues 10–17, 57–61, 120–123, 184–191, 231–235, and 296–299; these read GRPNVGKS, DTGGL, NKCE, DTAGI, and NKWD. The region spanning 354-439 is the KH-like domain; sequence RRVTTSVVNE…PIKLFWRGKQ (86 aa).

Belongs to the TRAFAC class TrmE-Era-EngA-EngB-Septin-like GTPase superfamily. EngA (Der) GTPase family. Associates with the 50S ribosomal subunit.

Its function is as follows. GTPase that plays an essential role in the late steps of ribosome biogenesis. This is GTPase Der from Prochlorococcus marinus (strain NATL1A).